A 397-amino-acid polypeptide reads, in one-letter code: DnaJ homolog subfamily A member 4 (397 aa).

Residues 4–70 (ETQYYDILGV…RDVYDQGGEQ (67 aa)) enclose the J domain. Position 18 is a phosphoserine (Ser-18). A CR-type zinc finger spans residues 122–206 (GVTKKLALQK…CSGAKVIREK (85 aa)). Zn(2+)-binding residues include Cys-135, Cys-138, Cys-151, Cys-154, Cys-178, Cys-181, Cys-194, and Cys-197. CXXCXGXG motif repeat units lie at residues 135-142 (CEKCEGVG), 151-158 (CPLCKGRG), 178-185 (CIECKGQG), and 194-201 (CESCSGAK). A Cysteine methyl ester modification is found at Cys-394. Cys-394 carries the S-farnesyl cysteine lipid modification. Positions 395-397 (QTA) are cleaved as a propeptide — removed in mature form.

It localises to the membrane. In Homo sapiens (Human), this protein is DnaJ homolog subfamily A member 4 (DNAJA4).